Consider the following 52-residue polypeptide: ATP synthase F(0) complex subunit 8 (52 aa).

The chain crosses the membrane as a helical span at residues 10 to 30; the sequence is LMTHLWAWLMLYLTTQKIKTF.

The protein belongs to the ATPase protein 8 family. As to quaternary structure, component of the ATP synthase complex composed at least of ATP5F1A/subunit alpha, ATP5F1B/subunit beta, ATP5MC1/subunit c (homooctomer), MT-ATP6/subunit a, MT-ATP8/subunit 8, ATP5ME/subunit e, ATP5MF/subunit f, ATP5MG/subunit g, ATP5MK/subunit k, ATP5MJ/subunit j, ATP5F1C/subunit gamma, ATP5F1D/subunit delta, ATP5F1E/subunit epsilon, ATP5PF/subunit F6, ATP5PB/subunit b, ATP5PD/subunit d, ATP5PO/subunit OSCP. ATP synthase complex consists of a soluble F(1) head domain (subunits alpha(3) and beta(3)) - the catalytic core - and a membrane F(0) domain - the membrane proton channel (subunits c, a, 8, e, f, g, k and j). These two domains are linked by a central stalk (subunits gamma, delta, and epsilon) rotating inside the F1 region and a stationary peripheral stalk (subunits F6, b, d, and OSCP).

It is found in the mitochondrion membrane. In terms of biological role, subunit 8, of the mitochondrial membrane ATP synthase complex (F(1)F(0) ATP synthase or Complex V) that produces ATP from ADP in the presence of a proton gradient across the membrane which is generated by electron transport complexes of the respiratory chain. ATP synthase complex consist of a soluble F(1) head domain - the catalytic core - and a membrane F(1) domain - the membrane proton channel. These two domains are linked by a central stalk rotating inside the F(1) region and a stationary peripheral stalk. During catalysis, ATP synthesis in the catalytic domain of F(1) is coupled via a rotary mechanism of the central stalk subunits to proton translocation. In vivo, can only synthesize ATP although its ATP hydrolase activity can be activated artificially in vitro. Part of the complex F(0) domain. In Lycodon semicarinatus (Ryukyu odd-tooth snake), this protein is ATP synthase F(0) complex subunit 8.